Reading from the N-terminus, the 519-residue chain is Ribonuclease Y 1 (519 aa).

The helical transmembrane segment at 2 to 22 (IILYIILAIIAIVVGYCAGFF) threads the bilayer. The segment at 84 to 113 (QKQEDRLLQREDSLDRKDNSFEKRENSLER) is disordered. Residues 209-294 (TITVVSLPND…EMVEKAKKEM (86 aa)) form the KH domain. In terms of domain architecture, HD spans 335 to 428 (VLNHSIEVAN…VAAANSISAA (94 aa)).

It belongs to the RNase Y family.

The protein resides in the cell membrane. Its function is as follows. Endoribonuclease that initiates mRNA decay. The polypeptide is Ribonuclease Y 1 (Pediococcus pentosaceus (strain ATCC 25745 / CCUG 21536 / LMG 10740 / 183-1w)).